A 283-amino-acid polypeptide reads, in one-letter code: Nucleotide-binding protein Hore_15880 (283 aa).

Gly8 to Ser15 lines the ATP pocket. Position 57-60 (Asp57–Gly60) interacts with GTP.

The protein belongs to the RapZ-like family.

Displays ATPase and GTPase activities. The sequence is that of Nucleotide-binding protein Hore_15880 from Halothermothrix orenii (strain H 168 / OCM 544 / DSM 9562).